Reading from the N-terminus, the 99-residue chain is Probable non-specific lipid-transfer protein AKCS9 (99 aa).

The N-terminal stretch at 1–33 (MTMKMKMKMSVVCAVVVVALFLIDVGPVAEAVT) is a signal peptide. 4 disulfides stabilise this stretch: cysteine 34–cysteine 68, cysteine 42–cysteine 56, cysteine 57–cysteine 92, and cysteine 66–cysteine 99.

This sequence belongs to the plant LTP family. As to expression, expressed in most tissues except nodules.

Functionally, potential lipid transfer protein. The polypeptide is Probable non-specific lipid-transfer protein AKCS9 (Vigna unguiculata (Cowpea)).